Reading from the N-terminus, the 142-residue chain is Ribosome-binding factor A (142 aa).

The protein belongs to the RbfA family. Monomer. Binds 30S ribosomal subunits, but not 50S ribosomal subunits or 70S ribosomes.

The protein resides in the cytoplasm. In terms of biological role, one of several proteins that assist in the late maturation steps of the functional core of the 30S ribosomal subunit. Associates with free 30S ribosomal subunits (but not with 30S subunits that are part of 70S ribosomes or polysomes). Required for efficient processing of 16S rRNA. May interact with the 5'-terminal helix region of 16S rRNA. The chain is Ribosome-binding factor A from Leifsonia xyli subsp. xyli (strain CTCB07).